The following is a 1787-amino-acid chain: Chitin synthase 5 (1787 aa).

Positions 1-26 (MASRRMSMYSVTSEGMGGPRGAGQQS) are disordered. The N-linked (GlcNAc...) asparagine glycan is linked to Asn-164. A disordered region spans residues 345 to 367 (RIRDGDESSDGGRGARTPNSAED). Residues Asn-643, Asn-657, Asn-668, and Asn-695 are each glycosylated (N-linked (GlcNAc...) asparagine). A run of 2 helical transmembrane segments spans residues 747–767 (MWVA…LRYV) and 783–803 (FVLC…IIFL). Residues Asn-894 and Asn-1018 are each glycosylated (N-linked (GlcNAc...) asparagine). Residues 1055-1075 (FLLAFAIIMCAVILLKFVSAL) form a helical membrane-spanning segment. An N-linked (GlcNAc...) asparagine glycan is attached at Asn-1420. Transmembrane regions (helical) follow at residues 1445 to 1465 (FVVF…VYLG), 1478 to 1498 (FPLI…LIFI), and 1506 to 1526 (IGWM…LPIY). An N-linked (GlcNAc...) asparagine glycan is attached at Asn-1533. The disordered stretch occupies residues 1628–1657 (SPNSPAPYQHMSRSPTAYAGPTPYSDNPAA). Positions 1729–1785 (GPDDFQIVDAIRAVLMEVDLDTVTKKQVRALVEQRLQTELVGERRTFLDRQIDNELA) constitute a DEK-C domain.

The protein belongs to the chitin synthase family. Class V subfamily.

It localises to the cell membrane. The catalysed reaction is [(1-&gt;4)-N-acetyl-beta-D-glucosaminyl](n) + UDP-N-acetyl-alpha-D-glucosamine = [(1-&gt;4)-N-acetyl-beta-D-glucosaminyl](n+1) + UDP + H(+). Functionally, polymerizes chitin, a structural polymer of the cell wall and septum, by transferring the sugar moiety of UDP-GlcNAc to the non-reducing end of the growing chitin polymer. May play a minor overlapping role with CHS6 in growth and differentiation. The chain is Chitin synthase 5 from Pyricularia oryzae (strain 70-15 / ATCC MYA-4617 / FGSC 8958) (Rice blast fungus).